The chain runs to 429 residues: SH2 domain-containing protein 5 (429 aa).

An SH2 domain is found at Trp-302–Tyr-398.

As to quaternary structure, interacts with BCR. In terms of tissue distribution, highly expressed in brain, particularly in Purkinjie cells in the cerebellum and the cornu ammonis of the hippocampus.

It localises to the postsynaptic density. May be involved in synaptic plasticity regulation through the control of Rac-GTP levels. This Mus musculus (Mouse) protein is SH2 domain-containing protein 5.